The sequence spans 237 residues: Nodulation protein NolA (237 aa).

One can recognise an HTH merR-type domain in the interval 10 to 79 (RWRIGELAGA…LQEIRRAMDG (70 aa)). Positions 13–32 (IGELAGATGVTVRTLHHYEH) form a DNA-binding region, H-T-H motif.

Involved in genotype-specific nodulation of soybeans. In Bradyrhizobium sp. (strain NC92), this protein is Nodulation protein NolA (nolA).